Consider the following 392-residue polypeptide: DNA replication and repair protein RecF (392 aa).

30-37 (GPNAAGKT) contributes to the ATP binding site.

It belongs to the RecF family.

The protein localises to the cytoplasm. Its function is as follows. The RecF protein is involved in DNA metabolism; it is required for DNA replication and normal SOS inducibility. RecF binds preferentially to single-stranded, linear DNA. It also seems to bind ATP. In Chloroflexus aggregans (strain MD-66 / DSM 9485), this protein is DNA replication and repair protein RecF.